A 422-amino-acid chain; its full sequence is UDP-N-acetylglucosamine 1-carboxyvinyltransferase (422 aa).

22-23 (KN) provides a ligand contact to phosphoenolpyruvate. Arginine 94 lines the UDP-N-acetyl-alpha-D-glucosamine pocket. The Proton donor role is filled by cysteine 118. Cysteine 118 carries the post-translational modification 2-(S-cysteinyl)pyruvic acid O-phosphothioketal. UDP-N-acetyl-alpha-D-glucosamine-binding positions include 123–127 (RPVDL), aspartate 309, and isoleucine 331.

Belongs to the EPSP synthase family. MurA subfamily.

It localises to the cytoplasm. It carries out the reaction phosphoenolpyruvate + UDP-N-acetyl-alpha-D-glucosamine = UDP-N-acetyl-3-O-(1-carboxyvinyl)-alpha-D-glucosamine + phosphate. Its pathway is cell wall biogenesis; peptidoglycan biosynthesis. Cell wall formation. Adds enolpyruvyl to UDP-N-acetylglucosamine. In Cereibacter sphaeroides (strain ATCC 17029 / ATH 2.4.9) (Rhodobacter sphaeroides), this protein is UDP-N-acetylglucosamine 1-carboxyvinyltransferase.